The following is a 169-amino-acid chain: Thaumatin-like pathogenesis-related protein 3 (169 aa).

An N-terminal signal peptide occupies residues 1 to 21 (MATSSAVLFLLLAVFAAGASA).

The protein belongs to the thaumatin family.

In terms of biological role, associated with resistance against stem rust fungi. The protein is Thaumatin-like pathogenesis-related protein 3 (RASTL-3) of Avena sativa (Oat).